We begin with the raw amino-acid sequence, 339 residues long: Putative pectinesterase 10 (339 aa).

Residues 1-28 form the signal peptide; sequence MKGVTIHNFCYSYFKVCLLVMSLAYGSA. Asn-112 is a glycosylation site (N-linked (GlcNAc...) asparagine). A substrate-binding site is contributed by Thr-116. Asp-169 serves as the catalytic Proton donor. Asp-190 acts as the Nucleophile in catalysis. Arg-252 and Trp-254 together coordinate substrate. An N-linked (GlcNAc...) asparagine glycan is attached at Asn-322.

This sequence belongs to the pectinesterase family. In terms of tissue distribution, expressed in siliques.

It is found in the secreted. Its subcellular location is the cell wall. It carries out the reaction [(1-&gt;4)-alpha-D-galacturonosyl methyl ester](n) + n H2O = [(1-&gt;4)-alpha-D-galacturonosyl](n) + n methanol + n H(+). The protein operates within glycan metabolism; pectin degradation; 2-dehydro-3-deoxy-D-gluconate from pectin: step 1/5. Functionally, acts in the modification of cell walls via demethylesterification of cell wall pectin. The sequence is that of Putative pectinesterase 10 (PME10) from Arabidopsis thaliana (Mouse-ear cress).